We begin with the raw amino-acid sequence, 47 residues long: Laccase-2d (47 aa).

Positions 2–47 constitute a Plastocyanin-like domain; sequence TGPVADLHIINKDLSPDGFQRPTVVAGGGRDVVSIGRAGDNVTIRF.

This sequence belongs to the multicopper oxidase family. As to quaternary structure, homodimer. Cu cation serves as cofactor. In terms of processing, N-glycosylated; contains 17% carbohydrates.

It is found in the secreted. It carries out the reaction 4 hydroquinone + O2 = 4 benzosemiquinone + 2 H2O. Its activity is regulated as follows. Inhibited by sodium azide, SDS and mercaptoethanol, but not by 4-hexyl resocinol, L-cysteine and dithiothreitol. Activity is inhibited by the heavy metal ions Cr, W, Sn, Ag(+) and Hg(2+), but not by Pb(2+), Fe(3+), Ni(2+), Li(2+), Co(2+) or Cd(2+). Functionally, lignin degradation and detoxification of lignin-derived products. Has highest activity towards ABTS, also active towards ferulic acid and guaiacol, but is not active towards tyrosine, vanillic acid, 2,5-dimethyl aniline, p-anisidine or violuric acid. This Cerrena unicolor (Canker rot fungus) protein is Laccase-2d.